The chain runs to 378 residues: Erythronate-4-phosphate dehydrogenase (378 aa).

2 residues coordinate substrate: S45 and T66. D146 and T175 together coordinate NAD(+). Residue R208 is part of the active site. NAD(+) is bound at residue D232. The active site involves E237. Catalysis depends on H254, which acts as the Proton donor. G257 serves as a coordination point for NAD(+). Y258 contributes to the substrate binding site.

Belongs to the D-isomer specific 2-hydroxyacid dehydrogenase family. PdxB subfamily. In terms of assembly, homodimer.

It localises to the cytoplasm. The catalysed reaction is 4-phospho-D-erythronate + NAD(+) = (R)-3-hydroxy-2-oxo-4-phosphooxybutanoate + NADH + H(+). It participates in cofactor biosynthesis; pyridoxine 5'-phosphate biosynthesis; pyridoxine 5'-phosphate from D-erythrose 4-phosphate: step 2/5. Functionally, catalyzes the oxidation of erythronate-4-phosphate to 3-hydroxy-2-oxo-4-phosphonooxybutanoate. This chain is Erythronate-4-phosphate dehydrogenase, found in Escherichia coli O17:K52:H18 (strain UMN026 / ExPEC).